The sequence spans 133 residues: Small ribosomal subunit protein uS19 (133 aa).

It belongs to the universal ribosomal protein uS19 family. As to quaternary structure, part of the 30S ribosomal subunit.

Functionally, protein S19 forms a complex with S13 that binds strongly to the 16S ribosomal RNA. The chain is Small ribosomal subunit protein uS19 from Thermococcus kodakarensis (strain ATCC BAA-918 / JCM 12380 / KOD1) (Pyrococcus kodakaraensis (strain KOD1)).